The sequence spans 118 residues: Large ribosomal subunit protein bL20 (118 aa).

The protein belongs to the bacterial ribosomal protein bL20 family.

Functionally, binds directly to 23S ribosomal RNA and is necessary for the in vitro assembly process of the 50S ribosomal subunit. It is not involved in the protein synthesizing functions of that subunit. The polypeptide is Large ribosomal subunit protein bL20 (Caldicellulosiruptor saccharolyticus (strain ATCC 43494 / DSM 8903 / Tp8T 6331)).